A 356-amino-acid polypeptide reads, in one-letter code: Peptide chain release factor 1 (356 aa).

N5-methylglutamine is present on Gln-233.

This sequence belongs to the prokaryotic/mitochondrial release factor family. In terms of processing, methylated by PrmC. Methylation increases the termination efficiency of RF1.

The protein resides in the cytoplasm. Peptide chain release factor 1 directs the termination of translation in response to the peptide chain termination codons UAG and UAA. The polypeptide is Peptide chain release factor 1 (Symbiobacterium thermophilum (strain DSM 24528 / JCM 14929 / IAM 14863 / T)).